The following is a 188-amino-acid chain: Peptidyl-tRNA hydrolase (188 aa).

Residue Tyr14 participates in tRNA binding. His19 serves as the catalytic Proton acceptor. 3 residues coordinate tRNA: Tyr64, Asn66, and Asn112.

The protein belongs to the PTH family. In terms of assembly, monomer.

The protein resides in the cytoplasm. It catalyses the reaction an N-acyl-L-alpha-aminoacyl-tRNA + H2O = an N-acyl-L-amino acid + a tRNA + H(+). In terms of biological role, hydrolyzes ribosome-free peptidyl-tRNAs (with 1 or more amino acids incorporated), which drop off the ribosome during protein synthesis, or as a result of ribosome stalling. Functionally, catalyzes the release of premature peptidyl moieties from peptidyl-tRNA molecules trapped in stalled 50S ribosomal subunits, and thus maintains levels of free tRNAs and 50S ribosomes. Releases Ala-tailed nascent peptides from stalled 50S ribosomal subunits. Non-templated Ala tailing occurs as part of the ribosome quality control (RQC) pathway. In the absence of Ala tails significantly less peptide release occurs. The Ala tail facilitates the interaction of Pth with the nascent peptide-tRNA ester bond as well as promoting nascent chain degradation; 3 Ala residues suffice to stimulate peptide release from stalled 50S ribosomal subunits. Complements a temperature-sensitive pth mutation in E.coli. This is Peptidyl-tRNA hydrolase from Bacillus subtilis (strain 168).